The primary structure comprises 1001 residues: O-GlcNAcase NagJ (1001 aa).

The N-terminal stretch at 1-30 (MKRKMLKRLLTSAFACMFIANGLITTTVRA) is a signal peptide. The catalytic domain stretch occupies residues 179–469 (VSARGIVEGF…WNRAIDMLYG (291 aa)). In terms of domain architecture, GH84 spans 180–452 (SARGIVEGFY…TAADYSWNMD (273 aa)). Positions 187, 218, and 297 each coordinate a protein. Aspartate 298 serves as the catalytic Proton donor. Residues tyrosine 335, 394–396 (WWN), aspartate 401, and asparagine 429 contribute to the a protein site. Coiled-coil stretches lie at residues 515 to 543 (KEDA…KANL) and 573 to 597 (VAQL…LNTA). Residues 916–1001 (PVRDFKASEI…KESLTLRTAR (86 aa)) form the Fibronectin type-III domain.

Belongs to the glycosyl hydrolase 84 family.

It catalyses the reaction 3-O-(N-acetyl-beta-D-glucosaminyl)-L-seryl-[protein] + H2O = N-acetyl-D-glucosamine + L-seryl-[protein]. The enzyme catalyses 3-O-(N-acetyl-beta-D-glucosaminyl)-L-threonyl-[protein] + H2O = L-threonyl-[protein] + N-acetyl-D-glucosamine. Its activity is regulated as follows. Inhibited by O-(2-acetamido-2-deoxy-D-glucopyranosylidene)amino-N-phenyl-carbamate (PUGNAc) and streptozotocin. In terms of biological role, binds carbohydrates. Capable of hydrolyzing the glycosidic link of O-GlcNAcylated proteins. Can bind and deglycosylate O-glycosylated peptides from mammals. This chain is O-GlcNAcase NagJ (nagJ), found in Clostridium perfringens (strain ATCC 13124 / DSM 756 / JCM 1290 / NCIMB 6125 / NCTC 8237 / Type A).